A 223-amino-acid chain; its full sequence is Translation initiation factor 6 (223 aa).

This sequence belongs to the eIF-6 family.

Binds to the 50S ribosomal subunit and prevents its association with the 30S ribosomal subunit to form the 70S initiation complex. The polypeptide is Translation initiation factor 6 (Sulfurisphaera tokodaii (strain DSM 16993 / JCM 10545 / NBRC 100140 / 7) (Sulfolobus tokodaii)).